An 853-amino-acid chain; its full sequence is Eukaryotic translation initiation factor 3 subunit C (853 aa).

Residues 1–78 are disordered; sequence MSRFFAASDS…EDEDQNKVLK (78 aa). Positions 11 to 46 are enriched in acidic residues; that stretch reads SSEESSEEELYSDNEASAQEDSDKDSDDDDSDDDDS. Residues 599–773 form the PCI domain; that stretch reads FHMHINLELL…SAIIFRKGVE (175 aa). Positions 798-853 are disordered; the sequence is TLEQRTQGTANAFERQGGRGGRGGGRGRGGGRGGGVPRGGRNQQFTGGALGRAIQA. Over residues 815–835 the composition is skewed to gly residues; the sequence is GRGGRGGGRGRGGGRGGGVPR.

It belongs to the eIF-3 subunit C family. Component of the eukaryotic translation initiation factor 3 (eIF-3) complex.

It is found in the cytoplasm. In terms of biological role, component of the eukaryotic translation initiation factor 3 (eIF-3) complex, which is involved in protein synthesis of a specialized repertoire of mRNAs and, together with other initiation factors, stimulates binding of mRNA and methionyl-tRNAi to the 40S ribosome. The eIF-3 complex specifically targets and initiates translation of a subset of mRNAs involved in cell proliferation. This chain is Eukaryotic translation initiation factor 3 subunit C, found in Phaeosphaeria nodorum (strain SN15 / ATCC MYA-4574 / FGSC 10173) (Glume blotch fungus).